Consider the following 512-residue polypeptide: Cytochrome P450 71BT1 (512 aa).

An N-terminal signal peptide occupies residues 1 to 24; it reads MENLFIFLFALLLFCFMLLKLSKK. N-linked (GlcNAc...) asparagine glycans are attached at residues N111 and N168. Heme is bound at residue C447.

The protein belongs to the cytochrome P450 family.

The sequence is that of Cytochrome P450 71BT1 from Catharanthus roseus (Madagascar periwinkle).